The following is a 380-amino-acid chain: RNA-binding motif protein, Y chromosome (380 aa).

The RRM domain maps to 8 to 86; it reads GKIFIGGLNI…KRIKVKQARR (79 aa). Disordered stretches follow at residues 82–226 and 279–358; these read KQAR…STSR and HEAP…YSAS. A compositionally biased stretch (polar residues) spans 166 to 178; it reads RSATSAQTRSNTG. Composition is skewed to basic and acidic residues over residues 180–190 and 333–351; these read RGREPHRREIS and IDRE…HSPK.

Interacts with SRSF3/SRP20, SRSF9/SRP30, SRSF5/SRP40, and SRSF6/SRP55; this interaction inhibits SRSF family member pre-mRNA splicing. Interacts with splicing factor proteins and KHDRBS3. Testis-specific.

It is found in the nucleus. Functionally, RNA-binding protein involved in pre-mRNA splicing. Required for sperm development. Acts additively with TRA2B to promote exon 7 inclusion of the survival motor neuron SMN. Binds non-specifically to mRNAs. This is RNA-binding motif protein, Y chromosome from Mus musculus (Mouse).